A 72-amino-acid polypeptide reads, in one-letter code: Translation initiation factor IF-1 (72 aa).

An S1-like domain is found at 1-72; that stretch reads MSKSDYIELE…TKGRITFRHK (72 aa).

The protein belongs to the IF-1 family. In terms of assembly, component of the 30S ribosomal translation pre-initiation complex which assembles on the 30S ribosome in the order IF-2 and IF-3, IF-1 and N-formylmethionyl-tRNA(fMet); mRNA recruitment can occur at any time during PIC assembly.

The protein localises to the cytoplasm. Functionally, one of the essential components for the initiation of protein synthesis. Stabilizes the binding of IF-2 and IF-3 on the 30S subunit to which N-formylmethionyl-tRNA(fMet) subsequently binds. Helps modulate mRNA selection, yielding the 30S pre-initiation complex (PIC). Upon addition of the 50S ribosomal subunit IF-1, IF-2 and IF-3 are released leaving the mature 70S translation initiation complex. In Vesicomyosocius okutanii subsp. Calyptogena okutanii (strain HA), this protein is Translation initiation factor IF-1.